Reading from the N-terminus, the 226-residue chain is CRISPR-associated protein Cas5 (226 aa).

Belongs to the CRISPR-associated protein Cas5 family. Subtype I-A/Apern subfamily. As to quaternary structure, can form a Cascade complex with Csa5, Cas7, Cas3, Cas3' and Cas8a2.

Functionally, CRISPR (clustered regularly interspaced short palindromic repeat) is an adaptive immune system that provides protection against mobile genetic elements (viruses, transposable elements and conjugative plasmids). CRISPR clusters contain spacers, sequences complementary to antecedent mobile elements, and target invading nucleic acids. CRISPR clusters are transcribed and processed into CRISPR RNA (crRNA). The polypeptide is CRISPR-associated protein Cas5 (cas5a) (Thermoproteus tenax (strain ATCC 35583 / DSM 2078 / JCM 9277 / NBRC 100435 / Kra 1)).